We begin with the raw amino-acid sequence, 520 residues long: 4-hydroxyphenylacetate 3-monooxygenase oxygenase component (520 aa).

Belongs to the FADH(2)-utilizing monooxygenase family. In terms of assembly, 4-HPA 3-monooxygenase consists of a reductase component HpaC and an oxygenase component HpaB.

The catalysed reaction is 4-hydroxyphenylacetate + FADH2 + O2 = 3,4-dihydroxyphenylacetate + FAD + H2O + H(+). It functions in the pathway aromatic compound metabolism; 4-hydroxyphenylacetate degradation; pyruvate and succinate semialdehyde from 4-hydroxyphenylacetate: step 1/7. Utilizes FADH(2) supplied by HpaC or by another flavin reductase, to catalyze the hydroxylation of 4-hydroxyphenylacetic acid, leading to the production of 3,4-DHPA. Can also oxidize phenol to catechol, and hydroxylate other phenol derivatives. The polypeptide is 4-hydroxyphenylacetate 3-monooxygenase oxygenase component (hpaB) (Escherichia coli).